The primary structure comprises 103 residues: Phospholipase A2 large subunit (103 aa).

Ca(2+)-binding residues include Trp7, Gly9, and Gly11. Cystine bridges form between Cys8-Cys30, Cys29-Cys68, Cys36-Cys61, and Cys59-Cys96. Asn16 carries an N-linked (GlcNAc...) asparagine glycan. His33 is a catalytic residue. Asp34 is a binding site for Ca(2+).

This sequence belongs to the phospholipase A2 family. Group III subfamily. Heterodimer composed of a large subunit and a small subunit; disulfide-linked. Ca(2+) is required as a cofactor. As to expression, expressed by the venom gland.

The protein resides in the secreted. It catalyses the reaction a 1,2-diacyl-sn-glycero-3-phosphocholine + H2O = a 1-acyl-sn-glycero-3-phosphocholine + a fatty acid + H(+). Its function is as follows. Phospholipase toxin, which catalyzes the calcium-dependent hydrolysis of the 2-acyl groups in 3-sn-phosphoglycerides. Inhibits both skeletal (RYR1) and cardiac (RYR2) ryanodine receptors (calcium release channels). Probably blocks ryanodine receptors by generating a lipid product. The protein is Phospholipase A2 large subunit of Chersonesometrus fulvipes (Indian black scorpion).